The primary structure comprises 452 residues: tRNA-2-methylthio-N(6)-dimethylallyladenosine synthase (452 aa).

In terms of domain architecture, MTTase N-terminal spans 16-134 (KRFFISTWGC…LPEYIERVKT (119 aa)). [4Fe-4S] cluster is bound by residues cysteine 25, cysteine 61, cysteine 95, cysteine 171, cysteine 175, and cysteine 178. Residues 157–387 (RKSDIKAFVT…VEAVNEIMAR (231 aa)) form the Radical SAM core domain. The TRAM domain occupies 390–452 (KEFEGKTVEV…NSFSLTGEII (63 aa)).

Belongs to the methylthiotransferase family. MiaB subfamily. In terms of assembly, monomer. Requires [4Fe-4S] cluster as cofactor.

The protein resides in the cytoplasm. The enzyme catalyses N(6)-dimethylallyladenosine(37) in tRNA + (sulfur carrier)-SH + AH2 + 2 S-adenosyl-L-methionine = 2-methylsulfanyl-N(6)-dimethylallyladenosine(37) in tRNA + (sulfur carrier)-H + 5'-deoxyadenosine + L-methionine + A + S-adenosyl-L-homocysteine + 2 H(+). Catalyzes the methylthiolation of N6-(dimethylallyl)adenosine (i(6)A), leading to the formation of 2-methylthio-N6-(dimethylallyl)adenosine (ms(2)i(6)A) at position 37 in tRNAs that read codons beginning with uridine. The polypeptide is tRNA-2-methylthio-N(6)-dimethylallyladenosine synthase (Clostridium novyi (strain NT)).